The primary structure comprises 122 residues: Methylglyoxal synthase (122 aa).

Positions 1–122 (MRIALIAHDK…DLFIKHLKGK (122 aa)) constitute an MGS-like domain. Residues His8, Lys12, 34–37 (TGTT), and 54–55 (SG) contribute to the substrate site. The Proton donor/acceptor role is filled by Asp60. His87 provides a ligand contact to substrate.

Belongs to the methylglyoxal synthase family.

The enzyme catalyses dihydroxyacetone phosphate = methylglyoxal + phosphate. Functionally, catalyzes the formation of methylglyoxal from dihydroxyacetone phosphate. The protein is Methylglyoxal synthase of Acholeplasma laidlawii (strain PG-8A).